The following is a 122-amino-acid chain: Ribonuclease P protein component (122 aa).

The protein belongs to the RnpA family. In terms of assembly, consists of a catalytic RNA component (M1 or rnpB) and a protein subunit.

The catalysed reaction is Endonucleolytic cleavage of RNA, removing 5'-extranucleotides from tRNA precursor.. Functionally, RNaseP catalyzes the removal of the 5'-leader sequence from pre-tRNA to produce the mature 5'-terminus. It can also cleave other RNA substrates such as 4.5S RNA. The protein component plays an auxiliary but essential role in vivo by binding to the 5'-leader sequence and broadening the substrate specificity of the ribozyme. The sequence is that of Ribonuclease P protein component from Shouchella clausii (strain KSM-K16) (Alkalihalobacillus clausii).